Reading from the N-terminus, the 95-residue chain is MEGGFGSDFGGSGSGKLDPGLIMEQVKVQIAVANAQELLQRMTDKCFRKCIGKPGGSLDNSEQKCIAMCMDRYMDAWNTVSRAYNSRLQRERANM.

Met1 is subject to N-acetylmethionine. Position 7 is a phosphoserine (Ser7). The short motif at Cys46–Cys69 is the Twin CX3C motif element. 2 cysteine pairs are disulfide-bonded: Cys46–Cys69 and Cys50–Cys65. Lys53 is modified (N6-succinyllysine).

It belongs to the small Tim family. As to quaternary structure, heterohexamer; composed of 3 copies of TIMM8 (TIMM8A or TIMM8B) and 3 copies of TIMM13, named soluble 70 kDa complex. Associates with the TIM22 complex, whose core is composed of TIMM22. As to expression, ubiquitous, with highest expression in heart, kidney, liver and skeletal muscle.

It is found in the mitochondrion inner membrane. Functionally, mitochondrial intermembrane chaperone that participates in the import and insertion of some multi-pass transmembrane proteins into the mitochondrial inner membrane. Also required for the transfer of beta-barrel precursors from the TOM complex to the sorting and assembly machinery (SAM complex) of the outer membrane. Acts as a chaperone-like protein that protects the hydrophobic precursors from aggregation and guide them through the mitochondrial intermembrane space. The TIMM8-TIMM13 complex mediates the import of proteins such as TIMM23, SLC25A12/ARALAR1 and SLC25A13/ARALAR2, while the predominant TIMM9-TIMM10 70 kDa complex mediates the import of much more proteins. The protein is Mitochondrial import inner membrane translocase subunit Tim13 (TIMM13) of Homo sapiens (Human).